Here is a 292-residue protein sequence, read N- to C-terminus: Small ribosomal subunit biogenesis GTPase RsgA (292 aa).

The region spanning 64 to 221 (RSELFRPAVA…LVDTPGFSSL (158 aa)) is the CP-type G domain. Residues 113–116 (NKMD) and 164–172 (GPSGVGKST) contribute to the GTP site. Positions 245, 250, 252, and 258 each coordinate Zn(2+).

It belongs to the TRAFAC class YlqF/YawG GTPase family. RsgA subfamily. Monomer. Associates with 30S ribosomal subunit, binds 16S rRNA. It depends on Zn(2+) as a cofactor.

The protein localises to the cytoplasm. Functionally, one of several proteins that assist in the late maturation steps of the functional core of the 30S ribosomal subunit. Helps release RbfA from mature subunits. May play a role in the assembly of ribosomal proteins into the subunit. Circularly permuted GTPase that catalyzes slow GTP hydrolysis, GTPase activity is stimulated by the 30S ribosomal subunit. The polypeptide is Small ribosomal subunit biogenesis GTPase RsgA (Clostridium botulinum (strain 657 / Type Ba4)).